The primary structure comprises 50 residues: MRDKIKLQSTESAYFYTTDKNKRNMAGKFEIKKYDPVLRKHVLFKEAKIK.

This sequence belongs to the bacterial ribosomal protein bL33 family.

This is Large ribosomal subunit protein bL33 from Hydrogenovibrio crunogenus (strain DSM 25203 / XCL-2) (Thiomicrospira crunogena).